Reading from the N-terminus, the 593-residue chain is Actin-histidine N-methyltransferase (593 aa).

The interval 1 to 21 (MGKKSRVKTQKSGTGATAAVS) is disordered. S-adenosyl-L-methionine contacts are provided by residues Arg-75, 104–106 (EGF), Arg-254, 275–279 (DMCNH), and 325–327 (SGF). The SET domain occupies 94 to 314 (EGFEIANFEE…AGEQIYIFYG (221 aa)). The segment at 549–593 (GFVNGENSLFNGTKSESENLIKEESNRETEDAKESSSESTDEVKE) is disordered. Polar residues predominate over residues 553–562 (GENSLFNGTK). Basic and acidic residues predominate over residues 563–593 (SESENLIKEESNRETEDAKESSSESTDEVKE).

This sequence belongs to the class V-like SAM-binding methyltransferase superfamily. SETD3 actin-histidine methyltransferase family.

The protein resides in the cytoplasm. It carries out the reaction L-histidyl-[protein] + S-adenosyl-L-methionine = N(tele)-methyl-L-histidyl-[protein] + S-adenosyl-L-homocysteine + H(+). In terms of biological role, protein-histidine N-methyltransferase that specifically mediates 3-methylhistidine (tele-methylhistidine) methylation of actin at 'His-73'. Does not have protein-lysine N-methyltransferase activity and probably only catalyzes histidine methylation of actin. This Gallus gallus (Chicken) protein is Actin-histidine N-methyltransferase.